The sequence spans 81 residues: Large ribosomal subunit protein bL27 (81 aa).

Residues 1-22 (MAHKTGQSSSSNGRESKSKRLG) form a disordered region.

The protein belongs to the bacterial ribosomal protein bL27 family.

The sequence is that of Large ribosomal subunit protein bL27 from Opitutus terrae (strain DSM 11246 / JCM 15787 / PB90-1).